Here is a 508-residue protein sequence, read N- to C-terminus: Purine-cytosine permease fcyB (508 aa).

The Cytoplasmic segment spans residues 1-72 (MAGAFDFDLE…AEQTDTSVFN (72 aa)). Residues 73 to 93 (IGSMWLAANMVVSSFAIGVLG) form a helical membrane-spanning segment. Residues 94–104 (KSVYSLGFVDA) are Extracellular-facing. The helical transmembrane segment at 105–125 (ILTVLFFNLLGIMTVCFFSCF) threads the bilayer. The Cytoplasmic portion of the chain corresponds to 126 to 147 (GPFGLRQMVFSRLWFGWYVTKG). Residues 148–168 (FAVLNILACLGWSAANAIVGA) traverse the membrane as a helical segment. Over 169–177 (QMLHAVNSD) the chain is Extracellular. Residues 178–198 (VPGFAAILIISICTLLVTFAG) traverse the membrane as a helical segment. At 199–200 (YK) the chain is on the cytoplasmic side. The helical transmembrane segment at 201-221 (VVHLYEYWSWIPTFIVFMIIL) threads the bilayer. Topologically, residues 222–243 (GTFAHSGDFQNIPMGVGTSEMG) are extracellular. A helical membrane pass occupies residues 244 to 264 (SVLSFGSAVYGFATGWTSYAA). The Cytoplasmic portion of the chain corresponds to 265–278 (DYTVYQPANRSKRK). The chain crosses the membrane as a helical span at residues 279–299 (IFLSTWLGLIVPLLFVEMLGV). Residues 300 to 323 (AVMTATDIKGSKYDVGYATSGNGG) are Extracellular-facing. The chain crosses the membrane as a helical span at residues 324–344 (LIAAVLQPLGGFGDFCLVILA). Over 345 to 374 (LSIVANNCPNFYSVALTVQVLSRYAQRVPR) the chain is Cytoplasmic. Residues 375-395 (FIWTLFGTGVSIAIAIPGYSH) form a helical membrane-spanning segment. The Extracellular portion of the chain corresponds to 396–404 (FETVLENFM). A helical transmembrane segment spans residues 405 to 425 (NFIAYWLAIYSAIAIMDHFVF). Topologically, residues 426-442 (KRGFSGYVVENFDKREK) are cytoplasmic. Residues 443-463 (LPVGIAATIAFGFGVAGMITG) traverse the membrane as a helical segment. The Extracellular segment spans residues 464–477 (MSQPWYVGPIARHA). The helical transmembrane segment at 478-498 (AGGDVGFELGFAFAAFSYLCL) threads the bilayer. Residues 499 to 508 (RPFEIKFFGR) lie on the Cytoplasmic side of the membrane.

This sequence belongs to the purine-cytosine permease (2.A.39) family.

The protein localises to the cell membrane. Its function is as follows. This permease has a broad specificity towards purines, and also transports cytosine, but neither uracil nor thymine. Contributes very little in purine uptake. Its major role may be the uptake of cytosine. This is Purine-cytosine permease fcyB (fcyB) from Emericella nidulans (strain FGSC A4 / ATCC 38163 / CBS 112.46 / NRRL 194 / M139) (Aspergillus nidulans).